Reading from the N-terminus, the 1302-residue chain is Multidrug resistance protein 1 (1302 aa).

A helical transmembrane segment spans residues 43–63 (GVFEIILLIIGIIGSIGVGCL). The 310-residue stretch at 51–360 (IIGIIGSIGV…ISTPINILNS (310 aa)) folds into the ABC transmembrane type-1 1 domain. Residue Asn83 is glycosylated (N-linked (GlcNAc...) asparagine). 5 helical membrane-spanning segments follow: residues 118-138 (LYFAIGNMVAGFLQTICFFVL), 192-212 (LFQTFSSFITGYLIGFIKCWD), 213-233 (LTLVVLCMFPFIMVSMMGLGM), 292-312 (IGIGTGLGCMMFFIMSSNALG), and 331-351 (AGTVLTVFMSVLLATQSLSQI). The region spanning 395 to 634 (IRFEDVQFVY…KGTYYGLVKR (240 aa)) is the ABC transporter 1 domain. 430 to 437 (GASGCGKS) contributes to the ATP binding site. Asn663 carries an N-linked (GlcNAc...) asparagine glycan. The chain crosses the membrane as a helical span at residues 712–732 (YIFCTLGLIGGIGAGAAFPFY). The 310-residue stretch at 713 to 1022 (IFCTLGLIGG…IGNVLPDVGK (310 aa)) folds into the ABC transmembrane type-1 2 domain. Asn751 carries an N-linked (GlcNAc...) asparagine glycan. A helical transmembrane segment spans residues 765–785 (MIIICIGIITMISFFCYVGLF). N-linked (GlcNAc...) asparagine glycosylation occurs at Asn808. Helical transmembrane passes span 841-861 (VGDIIEIMSTVGFGFGIGLYF) and 862-882 (SWKLSLCILAVFPIISFFMFI). The ABC transporter 2 domain occupies 1057–1296 (IEFKNIHFRY…KGFYYTLAMQ (240 aa)). 1092 to 1099 (GASGCGKS) lines the ATP pocket.

It belongs to the ABC transporter superfamily. ABCB family. Multidrug resistance exporter (TC 3.A.1.201) subfamily.

The protein localises to the membrane. It catalyses the reaction ATP + H2O + xenobioticSide 1 = ADP + phosphate + xenobioticSide 2.. Its function is as follows. Energy-dependent efflux pump responsible for decreased drug accumulation in multidrug resistance parasites. The polypeptide is Multidrug resistance protein 1 (Entamoeba histolytica (strain ATCC 30459 / HM-1:IMSS / ABRM)).